A 979-amino-acid chain; its full sequence is UPF0182 protein MRA_0066 (979 aa).

7 helical membrane passes run 19–39, 63–83, 114–134, 174–194, 211–231, 260–280, and 288–308; these read LVTA…LVDI, LAIV…ALLL, LFGW…ASFD, WLFV…YLFG, VQLA…YWLD, KLVL…AIFL, and MAAA…PLLM. The segment at 898–948 is disordered; the sequence is GTGRVATARGGDAASAPPPGAGGPAPPQAVPPPRTTQPPAAPPRGPDVPPA. Positions 913-946 are enriched in pro residues; that stretch reads APPPGAGGPAPPQAVPPPRTTQPPAAPPRGPDVP.

Belongs to the UPF0182 family.

The protein resides in the cell membrane. This Mycobacterium tuberculosis (strain ATCC 25177 / H37Ra) protein is UPF0182 protein MRA_0066.